The sequence spans 57 residues: MAVQQNKPTRSKRGMRRSHDALTAVTSLSVDKTSGEKHLRHHITADGFYRGRKVIAK.

Residues 1-37 form a disordered region; that stretch reads MAVQQNKPTRSKRGMRRSHDALTAVTSLSVDKTSGEK.

The protein belongs to the bacterial ribosomal protein bL32 family.

The chain is Large ribosomal subunit protein bL32 from Escherichia fergusonii (strain ATCC 35469 / DSM 13698 / CCUG 18766 / IAM 14443 / JCM 21226 / LMG 7866 / NBRC 102419 / NCTC 12128 / CDC 0568-73).